Reading from the N-terminus, the 86-residue chain is Protein Tat (86 aa).

Residues 1–24 (MEPVDPRLEPWKHPGSQPKTACTN) are interaction with human CREBBP. The segment at 1–48 (MEPVDPRLEPWKHPGSQPKTACTNCYCKKCCFHCQVCFITKALGISYG) is transactivation. Zn(2+)-binding residues include cysteine 22, cysteine 25, and cysteine 27. The cysteine-rich stretch occupies residues 22–37 (CTNCYCKKCCFHCQVC). The residue at position 28 (lysine 28) is an N6-acetyllysine; by host PCAF. The Zn(2+) site is built by cysteine 30, histidine 33, cysteine 34, and cysteine 37. Residues 38–48 (FITKALGISYG) are core. Positions 48 to 59 (GRKKRRQRRRAH) are enriched in basic residues. The disordered stretch occupies residues 48 to 86 (GRKKRRQRRRAHQNSQTHQASLSKQPTSQPRGDPTGPKE). Positions 49-57 (RKKRRQRRR) match the Nuclear localization signal, RNA-binding (TAR), and protein transduction motif. The tract at residues 49–86 (RKKRRQRRRAHQNSQTHQASLSKQPTSQPRGDPTGPKE) is interaction with the host capping enzyme RNGTT. Residues lysine 50 and lysine 51 each carry the N6-acetyllysine; by host EP300 and GCN5L2 modification. Asymmetric dimethylarginine; by host PRMT6 occurs at positions 52 and 53. Residues 60 to 77 (QNSQTHQASLSKQPTSQP) show a composition bias toward polar residues. Residue lysine 71 forms a Glycyl lysine isopeptide (Lys-Gly) (interchain with G-Cter in ubiquitin) linkage. The short motif at 78–80 (RGD) is the Cell attachment site element.

Belongs to the lentiviruses Tat family. Interacts with host CCNT1. Associates with the P-TEFb complex composed at least of Tat, P-TEFb (CDK9 and CCNT1), TAR RNA, RNA Pol II. Recruits the HATs CREBBP, TAF1/TFIID, EP300, PCAF and GCN5L2. Interacts with host KAT5/Tip60; this interaction targets the latter to degradation. Interacts with the host deacetylase SIRT1. Interacts with host capping enzyme RNGTT; this interaction stimulates RNGTT. Binds to host KDR, and to the host integrins ITGAV/ITGB3 and ITGA5/ITGB1. Interacts with host KPNB1/importin beta-1 without previous binding to KPNA1/importin alpha-1. Interacts with EIF2AK2. Interacts with host nucleosome assembly protein NAP1L1; this interaction may be required for the transport of Tat within the nucleus, since the two proteins interact at the nuclear rim. Interacts with host C1QBP/SF2P32; this interaction involves lysine-acetylated Tat. Interacts with the host chemokine receptors CCR2, CCR3 and CXCR4. Interacts with host DPP4/CD26; this interaction may trigger an anti-proliferative effect. Interacts with host LDLR. Interacts with the host extracellular matrix metalloproteinase MMP1. Interacts with host PRMT6; this interaction mediates Tat's methylation. Interacts with, and is ubiquitinated by MDM2/Hdm2. Interacts with host PSMC3 and HTATIP2. Interacts with STAB1; this interaction may overcome SATB1-mediated repression of IL2 and IL2RA (interleukin) in T cells by binding to the same domain than HDAC1. Interacts (when acetylated) with human CDK13, thereby increasing HIV-1 mRNA splicing and promoting the production of the doubly spliced HIV-1 protein Nef. Interacts with host TBP; this interaction modulates the activity of transcriptional pre-initiation complex. Interacts with host RELA. Interacts with host PLSCR1; this interaction negatively regulates Tat transactivation activity by altering its subcellular distribution. In terms of processing, asymmetrical arginine methylation by host PRMT6 seems to diminish the transactivation capacity of Tat and affects the interaction with host CCNT1. Acetylation by EP300, CREBBP, GCN5L2/GCN5 and PCAF regulates the transactivation activity of Tat. EP300-mediated acetylation of Lys-50 promotes dissociation of Tat from the TAR RNA through the competitive binding to PCAF's bromodomain. In addition, the non-acetylated Tat's N-terminus can also interact with PCAF. PCAF-mediated acetylation of Lys-28 enhances Tat's binding to CCNT1. Lys-50 is deacetylated by SIRT1. Post-translationally, polyubiquitination by host MDM2 does not target Tat to degradation, but activates its transactivation function and fosters interaction with CCNT1 and TAR RNA. In terms of processing, phosphorylated by EIF2AK2 on serine and threonine residues adjacent to the basic region important for TAR RNA binding and function. Phosphorylation of Tat by EIF2AK2 is dependent on the prior activation of EIF2AK2 by dsRNA.

It is found in the host nucleus. Its subcellular location is the host nucleolus. It localises to the host cytoplasm. The protein localises to the secreted. In terms of biological role, transcriptional activator that increases RNA Pol II processivity, thereby increasing the level of full-length viral transcripts. Recognizes a hairpin structure at the 5'-LTR of the nascent viral mRNAs referred to as the transactivation responsive RNA element (TAR) and recruits the cyclin T1-CDK9 complex (P-TEFb complex) that will in turn hyperphosphorylate the RNA polymerase II to allow efficient elongation. The CDK9 component of P-TEFb and other Tat-activated kinases hyperphosphorylate the C-terminus of RNA Pol II that becomes stabilized and much more processive. Other factors such as HTATSF1/Tat-SF1, SUPT5H/SPT5, and HTATIP2 are also important for Tat's function. Besides its effect on RNA Pol II processivity, Tat induces chromatin remodeling of proviral genes by recruiting the histone acetyltransferases (HATs) CREBBP, EP300 and PCAF to the chromatin. This also contributes to the increase in proviral transcription rate, especially when the provirus integrates in transcriptionally silent region of the host genome. To ensure maximal activation of the LTR, Tat mediates nuclear translocation of NF-kappa-B by interacting with host RELA. Through its interaction with host TBP, Tat may also modulate transcription initiation. Tat can reactivate a latently infected cell by penetrating in it and transactivating its LTR promoter. In the cytoplasm, Tat is thought to act as a translational activator of HIV-1 mRNAs. Functionally, extracellular circulating Tat can be endocytosed by surrounding uninfected cells via the binding to several surface receptors such as CD26, CXCR4, heparan sulfate proteoglycans (HSPG) or LDLR. Neurons are rarely infected, but they internalize Tat via their LDLR. Through its interaction with nuclear HATs, Tat is potentially able to control the acetylation-dependent cellular gene expression. Modulates the expression of many cellular genes involved in cell survival, proliferation or in coding for cytokines or cytokine receptors. Tat plays a role in T-cell and neurons apoptosis. Tat induced neurotoxicity and apoptosis probably contribute to neuroAIDS. Circulating Tat also acts as a chemokine-like and/or growth factor-like molecule that binds to specific receptors on the surface of the cells, affecting many cellular pathways. In the vascular system, Tat binds to ITGAV/ITGB3 and ITGA5/ITGB1 integrins dimers at the surface of endothelial cells and competes with bFGF for heparin-binding sites, leading to an excess of soluble bFGF. This chain is Protein Tat, found in Homo sapiens (Human).